We begin with the raw amino-acid sequence, 310 residues long: Hairy/enhancer-of-split related with YRPW motif-like protein (310 aa).

The tract at residues 1–21 (MKRPHDYSSPDSDTDELIDVG) is disordered. A compositionally biased stretch (acidic residues) spans 12-21 (SDTDELIDVG). Residues 43–98 (ARKKRRGIIEKRRRDRINHSLSELRRLVPSAFEKQGSSKLEKAEILQMTVDHLKLL) form the bHLH domain. In terms of domain architecture, Orange spans 116 to 152 (YRTLGFRECVGEVVRYLSSLEGVESSDPIGARLVSHL). Low complexity-rich tracts occupy residues 182–192 (LQAASPPASST) and 261–273 (PSSSSSSSNSSPP). Disordered regions lie at residues 182 to 208 (LQAASPPASSTPFPPNARRDLAPHGTA) and 248 to 310 (HRLQ…IGAF). Residues 293 to 302 (LSSSSKSAQA) are compositionally biased toward polar residues.

Belongs to the HEY family.

Its subcellular location is the nucleus. In terms of biological role, transcriptional repressor which functions as a downstream effector of Notch signaling. This is Hairy/enhancer-of-split related with YRPW motif-like protein (heyl) from Danio rerio (Zebrafish).